The chain runs to 427 residues: Trigger factor (427 aa).

One can recognise a PPIase FKBP-type domain in the interval 163 to 248 (GDTVVIDFVG…VHEVKAKEVP (86 aa)).

Belongs to the FKBP-type PPIase family. Tig subfamily.

It is found in the cytoplasm. It catalyses the reaction [protein]-peptidylproline (omega=180) = [protein]-peptidylproline (omega=0). In terms of biological role, involved in protein export. Acts as a chaperone by maintaining the newly synthesized protein in an open conformation. Functions as a peptidyl-prolyl cis-trans isomerase. The protein is Trigger factor of Streptococcus equi subsp. zooepidemicus (strain H70).